We begin with the raw amino-acid sequence, 293 residues long: METESRAQSTNQTQTDSLSPSPNPVSPVPLNNPTSGPRYGTVIPNRIFVGGIDFKTNENDLRKFFSQYGSVKEVKIVNDRAGVSKGYGFITFETQEDAQKILQEAEKLNYKDKKLNIGPAIRKQQVGIPRSSLMPAAGTMYLTTSTGYPYTYHNGVAYFHTPEVTSVPPSWPSRSISSSPVMVAQPVYQQPAYHYQAPAQCLPGQWQWGVPQSPASSAPFLYLQPSEVIYQPVEIAQDGGCVPPPLSLMETSVPEPYSDHGVQAAYHQVYASSAIAMPAPMMQPEPIKVRSLF.

Positions 1-16 are enriched in polar residues; the sequence is METESRAQSTNQTQTD. The interval 1–39 is disordered; sequence METESRAQSTNQTQTDSLSPSPNPVSPVPLNNPTSGPRY. 3 positions are modified to phosphoserine: Ser19, Ser21, and Ser26. Residues 45 to 122 form the RRM domain; it reads NRIFVGGIDF…KKLNIGPAIR (78 aa). In terms of domain architecture, DAZ spans 172-196; sequence PSRSISSSPVMVAQPVYQQPAYHYQ.

It belongs to the RRM DAZ family. As to quaternary structure, interacts with DAZ1 and DAZL. In terms of tissue distribution, testis specific. Not expressed in early embryos, primoridal germ cells and spermatogonial cells. First expressed in the cytoplasm of spermatocytes and then persists through meiosis.

The protein localises to the cytoplasm. Its function is as follows. Probable RNA-binding protein, which may be required during spermatogenesis. May act by binding to the 3'-UTR of mRNAs and regulating their translation. In Mus musculus (Mouse), this protein is Protein boule-like.